The primary structure comprises 1527 residues: Lysophospholipase nte1 (1527 aa).

The Cytoplasmic segment spans residues 1–73; the sequence is MADSGASVPS…SPPTPTTMVG (73 aa). The chain crosses the membrane as a helical span at residues 74–94; the sequence is WIGWVFSLVFQTIPSVLYWVI. At 95 to 116 the chain is on the lumenal side; it reads TFSTITLPTWLFTLFSMSLTFT. A helical membrane pass occupies residues 117 to 137; that stretch reads MNFTTLLLIVLGLVSTVSWFI. The Cytoplasmic portion of the chain corresponds to 138–1527; the sequence is RYRFLNMYSR…RTLAPRRASI (1390 aa). The segment covering 299–310 has biased composition (low complexity); the sequence is GSSSSMSSVQPS. Disordered regions lie at residues 299-387, 567-596, and 765-785; these read GSSS…RRKS, DQFATTPRLHSPLTEKERSPLRRSSLQRKD, and ATSRGATAAAPINESKRKKPS. The span at 364 to 377 shows a compositional bias: polar residues; it reads RASSYHPNGQSTAS. A nucleoside 3',5'-cyclic phosphate contacts are provided by residues 682–809 and 846–966; these read GGTS…SYRS and RLTG…IAQR. One can recognise a PNPLA domain in the interval 1224–1388; sequence LVLGGGGARG…IDNLTVAHMK (165 aa). A GXGXXG motif is present at residues 1228 to 1233; it reads GGGARG. Residues 1255 to 1259 carry the GXSXG motif; sequence GTSIG. The active-site Nucleophile is serine 1257. The active-site Proton acceptor is aspartate 1375. Residues 1375–1377 carry the DGA/G motif; the sequence is DGG. The tract at residues 1504-1527 is disordered; it reads LPLPEENEEKKKLQRTLAPRRASI.

This sequence belongs to the NTE family.

It localises to the endoplasmic reticulum membrane. It catalyses the reaction a 1-acyl-sn-glycero-3-phosphocholine + H2O = sn-glycerol 3-phosphocholine + a fatty acid + H(+). With respect to regulation, inhibited by organophosphorus esters. Its function is as follows. Intracellular phospholipase B that catalyzes the double deacylation of phosphatidylcholine (PC) to glycerophosphocholine (GroPCho). Plays an important role in membrane lipid homeostasis. Responsible for the rapid PC turnover in response to inositol, elevated temperatures, or when choline is present in the growth medium. This Emericella nidulans (strain FGSC A4 / ATCC 38163 / CBS 112.46 / NRRL 194 / M139) (Aspergillus nidulans) protein is Lysophospholipase nte1 (nte1).